The following is a 92-amino-acid chain: YcgL domain-containing protein Sfri_1738 (92 aa).

The region spanning 1 to 85 (MICAVYKSGR…PQINLLEQHK (85 aa)) is the YcgL domain.

The chain is YcgL domain-containing protein Sfri_1738 from Shewanella frigidimarina (strain NCIMB 400).